The primary structure comprises 1436 residues: DNA-directed RNA polymerase subunit beta' (1436 aa).

4 residues coordinate Zn(2+): Cys-70, Cys-72, Cys-85, and Cys-88. Mg(2+)-binding residues include Asp-481, Asp-483, and Asp-485. Zn(2+) contacts are provided by Cys-829, Cys-903, Cys-910, and Cys-913.

The protein belongs to the RNA polymerase beta' chain family. As to quaternary structure, the RNAP catalytic core consists of 2 alpha, 1 beta, 1 beta' and 1 omega subunit. When a sigma factor is associated with the core the holoenzyme is formed, which can initiate transcription. The cofactor is Mg(2+). Zn(2+) serves as cofactor.

The enzyme catalyses RNA(n) + a ribonucleoside 5'-triphosphate = RNA(n+1) + diphosphate. DNA-dependent RNA polymerase catalyzes the transcription of DNA into RNA using the four ribonucleoside triphosphates as substrates. The chain is DNA-directed RNA polymerase subunit beta' from Flavobacterium johnsoniae (strain ATCC 17061 / DSM 2064 / JCM 8514 / BCRC 14874 / CCUG 350202 / NBRC 14942 / NCIMB 11054 / UW101) (Cytophaga johnsonae).